Consider the following 98-residue polypeptide: Cystatin-B (98 aa).

Met-1 is modified (N-acetylmethionine). The Secondary area of contact signature appears at 46–50; it reads QVVAG.

Belongs to the cystatin family.

Its subcellular location is the cytoplasm. This is an intracellular thiol proteinase inhibitor. This chain is Cystatin-B (CSTB), found in Sus scrofa (Pig).